The chain runs to 337 residues: Glutaminase-asparaginase (337 aa).

An Asparaginase/glutaminase domain is found at 10-337 (ANVVILATGG…KELQRIFWEY (328 aa)). The active-site Acyl-ester intermediate is Thr-20. Substrate-binding positions include Ser-67 and 100 to 101 (TD).

Belongs to the asparaginase 1 family. As to quaternary structure, homotetramer.

The protein localises to the periplasm. The catalysed reaction is L-glutamine + H2O = L-glutamate + NH4(+). It carries out the reaction L-asparagine + H2O = L-aspartate + NH4(+). The polypeptide is Glutaminase-asparaginase (ansB) (Pseudomonas sp. (strain ATCC 29598 / 7A)).